The chain runs to 493 residues: MTLVDKFVTHVISESSFEEMDRIYLTNRVLSRVGEGVLEVETNLDKLIDLKDQLVEETVRLETIEDSQTAREILGTELMDLVTPCPSQVNRDFWEAYAYSPEQAIEDFYQLSQKNDYIKLKAIAKNIAYRVPSDYGELEITINLSKPEKDPKEIAVAKLVQASNYPQCQLCLENEGYHGRVNHPARSNHRIIRFEMVGQEWGFQYSPYAYFNEHCIFLDGQHRPMAISRQSFERLLAIVEQFPGYFAGSNADLPIVGGSILTHDHYQGGRHVFPMELAPLQKTFRFAGFEQVKAGIIKWPMSVLRLTSDSKEDLINLADKIFQEWRQYSDSSVQILAETDGTPHHTITPIARKRDGQFELDLVLRDNQTSAEHPDGIYHPHKDVQHIKKENIGLIEVMGLAILPPRLKEEVEQVASYLVGEAVTVADYHQEWADQLKSQHPDLTDKEKALAIVKDSVGAIFVRVLEDAGVYKQTEQGQTAFMRFVEQVGILLD.

It belongs to the galactose-1-phosphate uridylyltransferase type 2 family.

It localises to the cytoplasm. The enzyme catalyses alpha-D-galactose 1-phosphate + UDP-alpha-D-glucose = alpha-D-glucose 1-phosphate + UDP-alpha-D-galactose. The protein operates within carbohydrate metabolism; galactose metabolism. In Streptococcus pneumoniae (strain ATCC BAA-255 / R6), this protein is Galactose-1-phosphate uridylyltransferase 2 (galT2).